The following is a 98-amino-acid chain: Alpha-elicitin hibernalin (98 aa).

3 cysteine pairs are disulfide-bonded: Cys3-Cys71, Cys27-Cys56, and Cys51-Cys95.

The protein localises to the secreted. Functionally, induces local and distal defense responses (incompatible hypersensitive reaction) in plants from the solanaceae and cruciferae families. Elicits leaf necrosis and causes the accumulation of pathogenesis-related proteins. Might interact with the lipidic molecules of the plasma membrane. In Phytophthora hibernalis, this protein is Alpha-elicitin hibernalin.